Here is a 180-residue protein sequence, read N- to C-terminus: ATP-dependent protease subunit HslV (180 aa).

Thr-7 is an active-site residue. The Na(+) site is built by Gly-163, Cys-166, and Thr-169.

It belongs to the peptidase T1B family. HslV subfamily. As to quaternary structure, a double ring-shaped homohexamer of HslV is capped on each side by a ring-shaped HslU homohexamer. The assembly of the HslU/HslV complex is dependent on binding of ATP.

It is found in the cytoplasm. It carries out the reaction ATP-dependent cleavage of peptide bonds with broad specificity.. Allosterically activated by HslU binding. In terms of biological role, protease subunit of a proteasome-like degradation complex believed to be a general protein degrading machinery. The protein is ATP-dependent protease subunit HslV of Alcanivorax borkumensis (strain ATCC 700651 / DSM 11573 / NCIMB 13689 / SK2).